The chain runs to 58 residues: ILSFVFACLLALSAVSAAPEPRWKVFKKIEKMGRNIRDGIVKAGPAIEVLGSAKALGK.

A signal peptide spans 1 to 21 (ILSFVFACLLALSAVSAAPEP).

Belongs to the cecropin family.

Its subcellular location is the secreted. In terms of biological role, cecropins have lytic and antibacterial activity against several Gram-positive and Gram-negative bacteria. The chain is Cecropin-B (CECB) from Spodoptera litura (Asian cotton leafworm).